The sequence spans 255 residues: uncharacterized protein (255 aa).

The J domain occupies 4–72 (DPYSVLGVEK…KRRKHYDKTG (69 aa)). Composition is skewed to basic residues over residues 167–178 (FAPNEKKRKRRA) and 243–255 (TKPKKSKKSRSKE). Disordered stretches follow at residues 167-215 (FAPN…EEAL) and 230-255 (LISNLESKYSKSSTKPKKSKKSRSKE).

Belongs to the DnaJ family.

The protein resides in the nucleus. The protein localises to the nucleolus. This is an uncharacterized protein from Schizosaccharomyces pombe (strain 972 / ATCC 24843) (Fission yeast).